Reading from the N-terminus, the 184-residue chain is Peptide deformylase (184 aa).

Positions 92 and 134 each coordinate Fe cation. Glutamate 135 is a catalytic residue. A Fe cation-binding site is contributed by histidine 138.

Belongs to the polypeptide deformylase family. Fe(2+) serves as cofactor.

It catalyses the reaction N-terminal N-formyl-L-methionyl-[peptide] + H2O = N-terminal L-methionyl-[peptide] + formate. Its function is as follows. Removes the formyl group from the N-terminal Met of newly synthesized proteins. Requires at least a dipeptide for an efficient rate of reaction. N-terminal L-methionine is a prerequisite for activity but the enzyme has broad specificity at other positions. The chain is Peptide deformylase from Psychrobacter cryohalolentis (strain ATCC BAA-1226 / DSM 17306 / VKM B-2378 / K5).